The sequence spans 406 residues: Tryptophan 2,3-dioxygenase (406 aa).

Substrate contacts are provided by residues 72 to 76 and Arg144; that span reads FIVTH. His328 is a heme binding site. Thr342 lines the substrate pocket.

It belongs to the tryptophan 2,3-dioxygenase family. As to quaternary structure, homotetramer. Dimer of dimers. It depends on heme as a cofactor.

The enzyme catalyses L-tryptophan + O2 = N-formyl-L-kynurenine. Its pathway is amino-acid degradation; L-tryptophan degradation via kynurenine pathway; L-kynurenine from L-tryptophan: step 1/2. Functionally, heme-dependent dioxygenase that catalyzes the oxidative cleavage of the L-tryptophan (L-Trp) pyrrole ring and converts L-tryptophan to N-formyl-L-kynurenine. Catalyzes the oxidative cleavage of the indole moiety. This is Tryptophan 2,3-dioxygenase from Xenopus tropicalis (Western clawed frog).